An 873-amino-acid polypeptide reads, in one-letter code: Bifunctional uridylyltransferase/uridylyl-removing enzyme (873 aa).

The tract at residues 1–332 (MKYLSPLSLS…HQGEQDDAII (332 aa)) is uridylyltransferase. The tract at residues 333–692 (IDDDFQRRGR…ISKNASRGGT (360 aa)) is uridylyl-removing. The 123-residue stretch at 451–573 (VDEHSIRLLK…VRDEERLDYL (123 aa)) folds into the HD domain. ACT domains follow at residues 693–777 (EIFV…RPPR) and 800–873 (LMEF…RLSS).

It belongs to the GlnD family. Mg(2+) serves as cofactor.

The enzyme catalyses [protein-PII]-L-tyrosine + UTP = [protein-PII]-uridylyl-L-tyrosine + diphosphate. The catalysed reaction is [protein-PII]-uridylyl-L-tyrosine + H2O = [protein-PII]-L-tyrosine + UMP + H(+). Its activity is regulated as follows. Uridylyltransferase (UTase) activity is inhibited by glutamine, while glutamine activates uridylyl-removing (UR) activity. Its function is as follows. Modifies, by uridylylation and deuridylylation, the PII regulatory proteins (GlnB and homologs), in response to the nitrogen status of the cell that GlnD senses through the glutamine level. Under low glutamine levels, catalyzes the conversion of the PII proteins and UTP to PII-UMP and PPi, while under higher glutamine levels, GlnD hydrolyzes PII-UMP to PII and UMP (deuridylylation). Thus, controls uridylylation state and activity of the PII proteins, and plays an important role in the regulation of nitrogen assimilation and metabolism. The protein is Bifunctional uridylyltransferase/uridylyl-removing enzyme of Aliivibrio fischeri (strain ATCC 700601 / ES114) (Vibrio fischeri).